The following is a 571-amino-acid chain: WAP, Kazal, immunoglobulin, Kunitz and NTR domain-containing protein 2 (571 aa).

The first 29 residues, 1–29 (MCAPGYHRFWFHWGLLLLLLLEAPLRGLA), serve as a signal peptide directing secretion. Residues 34–87 (RYSHAGICPNDMNPNLWVDAQSTCKRECETDQECETYEKCCPNVCGTKSCVAAR) enclose the WAP domain. 8 cysteine pairs are disulfide-bonded: Cys41-Cys74, Cys57-Cys78, Cys61-Cys73, Cys67-Cys83, Cys129-Cys159, Cys133-Cys152, Cys141-Cys170, and Cys226-Cys282. Positions 121-172 (WDGQPVCKCKDRCEKEPSFTCASDGLTYYNRCFMDAEACSKGITLSVVTCRY) constitute a Kazal-like domain. The 94-residue stretch at 205 to 298 (PALLNHPVHQ…GVLRADFPLS (94 aa)) folds into the Ig-like C2-type domain. N-linked (GlcNAc...) asparagine glycosylation is present at Asn314. Cystine bridges form between Cys323–Cys373, Cys332–Cys356, Cys348–Cys369, Cys381–Cys431, Cys390–Cys414, Cys406–Cys427, Cys440–Cys510, Cys443–Cys512, and Cys454–Cys561. 2 consecutive BPTI/Kunitz inhibitor domains span residues 323–373 (CLKP…MLAC) and 381–431 (CSLP…EESC). Positions 440–561 (CRACKPRQKL…LREVMYKKTC (122 aa)) constitute an NTR domain. N-linked (GlcNAc...) asparagine glycosylation occurs at Asn514.

This sequence belongs to the WFIKKN family. As to quaternary structure, interacts with both mature and propeptide myostatin/MSTN. Widely expressed, with high expression in skeletal muscle and heart. Also expressed in brain, lung and testis. Weakly expressed in liver and kidney.

The protein resides in the secreted. In terms of biological role, protease-inhibitor that contains multiple distinct protease inhibitor domains. Probably has serine protease- and metalloprotease-inhibitor activity. Inhibits the biological activity of mature myostatin, but not activin. The sequence is that of WAP, Kazal, immunoglobulin, Kunitz and NTR domain-containing protein 2 (Wfikkn2) from Mus musculus (Mouse).